Consider the following 100-residue polypeptide: Tetrahydromethanopterin S-methyltransferase subunit B (100 aa).

A helical transmembrane segment spans residues 80–100 (KLTNIVYGFILGLIILFALLL).

It belongs to the MtrB family. As to quaternary structure, the complex is composed of 8 subunits; MtrA, MtrB, MtrC, MtrD, MtrE, MtrF, MtrG and MtrH.

Its subcellular location is the cell membrane. The catalysed reaction is 5-methyl-5,6,7,8-tetrahydromethanopterin + coenzyme M + 2 Na(+)(in) = 5,6,7,8-tetrahydromethanopterin + methyl-coenzyme M + 2 Na(+)(out). The protein operates within one-carbon metabolism; methanogenesis from CO(2); methyl-coenzyme M from 5,10-methylene-5,6,7,8-tetrahydromethanopterin: step 2/2. Part of a complex that catalyzes the formation of methyl-coenzyme M and tetrahydromethanopterin from coenzyme M and methyl-tetrahydromethanopterin. This is an energy-conserving, sodium-ion translocating step. In Methanothermobacter marburgensis (strain ATCC BAA-927 / DSM 2133 / JCM 14651 / NBRC 100331 / OCM 82 / Marburg) (Methanobacterium thermoautotrophicum), this protein is Tetrahydromethanopterin S-methyltransferase subunit B.